Reading from the N-terminus, the 22-residue chain is Cysteine-rich venom protein collettin-a (22 aa).

The span at 1–15 shows a compositional bias: basic and acidic residues; sequence SNKKNYQKEIVDKHN. Residues 1–22 form a disordered region; it reads SNKKNYQKEIVDKHNALRRSVK.

The protein belongs to the CRISP family. In terms of processing, contains 8 disulfide bonds. As to expression, expressed by the venom gland.

It localises to the secreted. This chain is Cysteine-rich venom protein collettin-a, found in Pseudechis colletti (Collett's snake).